A 363-amino-acid polypeptide reads, in one-letter code: Biotin synthase (363 aa).

Positions 40 to 268 (NVVQVSTLLS…ETQVRLSAGR (229 aa)) constitute a Radical SAM core domain. [4Fe-4S] cluster-binding residues include C55, C59, and C62. [2Fe-2S] cluster is bound by residues C99, C131, C191, and R263.

This sequence belongs to the radical SAM superfamily. Biotin synthase family. As to quaternary structure, homodimer. [4Fe-4S] cluster is required as a cofactor. It depends on [2Fe-2S] cluster as a cofactor.

The enzyme catalyses (4R,5S)-dethiobiotin + (sulfur carrier)-SH + 2 reduced [2Fe-2S]-[ferredoxin] + 2 S-adenosyl-L-methionine = (sulfur carrier)-H + biotin + 2 5'-deoxyadenosine + 2 L-methionine + 2 oxidized [2Fe-2S]-[ferredoxin]. It participates in cofactor biosynthesis; biotin biosynthesis; biotin from 7,8-diaminononanoate: step 2/2. Functionally, catalyzes the conversion of dethiobiotin (DTB) to biotin by the insertion of a sulfur atom into dethiobiotin via a radical-based mechanism. In Flavobacterium johnsoniae (strain ATCC 17061 / DSM 2064 / JCM 8514 / BCRC 14874 / CCUG 350202 / NBRC 14942 / NCIMB 11054 / UW101) (Cytophaga johnsonae), this protein is Biotin synthase.